A 323-amino-acid polypeptide reads, in one-letter code: Germacrene A synthase (323 aa).

5 residues coordinate Mg(2+): aspartate 82, aspartate 86, asparagine 222, serine 226, and glutamate 230. The short motif at 82-86 is the DDXXD motif element; the sequence is DDQCD.

This sequence belongs to the terpene synthase family. Requires Mg(2+) as cofactor.

It carries out the reaction (2E,6E)-farnesyl diphosphate = 5-epi-alpha-selinene + diphosphate. Catalyzes the cyclization of farnesyl diphosphate (FPP) to the sesquiterpene germacrene A. This is Germacrene A synthase from Nostoc punctiforme (strain ATCC 29133 / PCC 73102).